A 387-amino-acid chain; its full sequence is 1-deoxy-D-xylulose 5-phosphate reductoisomerase (387 aa).

Positions 11, 12, 13, 14, 37, 38, 39, and 125 each coordinate NADPH. K126 lines the 1-deoxy-D-xylulose 5-phosphate pocket. E127 serves as a coordination point for NADPH. A Mn(2+)-binding site is contributed by D151. Residues S152, E153, S177, and H200 each coordinate 1-deoxy-D-xylulose 5-phosphate. E153 contacts Mn(2+). G206 is a binding site for NADPH. Positions 213, 218, 219, and 222 each coordinate 1-deoxy-D-xylulose 5-phosphate. Residue E222 coordinates Mn(2+).

This sequence belongs to the DXR family. It depends on Mg(2+) as a cofactor. Mn(2+) is required as a cofactor.

The enzyme catalyses 2-C-methyl-D-erythritol 4-phosphate + NADP(+) = 1-deoxy-D-xylulose 5-phosphate + NADPH + H(+). The protein operates within isoprenoid biosynthesis; isopentenyl diphosphate biosynthesis via DXP pathway; isopentenyl diphosphate from 1-deoxy-D-xylulose 5-phosphate: step 1/6. In terms of biological role, catalyzes the NADPH-dependent rearrangement and reduction of 1-deoxy-D-xylulose-5-phosphate (DXP) to 2-C-methyl-D-erythritol 4-phosphate (MEP). This is 1-deoxy-D-xylulose 5-phosphate reductoisomerase from Desulforamulus reducens (strain ATCC BAA-1160 / DSM 100696 / MI-1) (Desulfotomaculum reducens).